A 444-amino-acid chain; its full sequence is tRNA-2-methylthio-N(6)-dimethylallyladenosine synthase (444 aa).

The 117-residue stretch at 10-126 (SSFYIHTFGC…LAGLVAGLRE (117 aa)) folds into the MTTase N-terminal domain. [4Fe-4S] cluster contacts are provided by Cys-19, Cys-55, Cys-89, Cys-163, Cys-167, and Cys-170. The 231-residue stretch at 149-379 (RAGSISAFLP…IELQNAISRE (231 aa)) folds into the Radical SAM core domain. The TRAM domain maps to 382 to 444 (QREIGKTVEV…TSATLSGEAV (63 aa)).

It belongs to the methylthiotransferase family. MiaB subfamily. As to quaternary structure, monomer. Requires [4Fe-4S] cluster as cofactor.

The protein localises to the cytoplasm. It carries out the reaction N(6)-dimethylallyladenosine(37) in tRNA + (sulfur carrier)-SH + AH2 + 2 S-adenosyl-L-methionine = 2-methylsulfanyl-N(6)-dimethylallyladenosine(37) in tRNA + (sulfur carrier)-H + 5'-deoxyadenosine + L-methionine + A + S-adenosyl-L-homocysteine + 2 H(+). Functionally, catalyzes the methylthiolation of N6-(dimethylallyl)adenosine (i(6)A), leading to the formation of 2-methylthio-N6-(dimethylallyl)adenosine (ms(2)i(6)A) at position 37 in tRNAs that read codons beginning with uridine. This Chlorobaculum tepidum (strain ATCC 49652 / DSM 12025 / NBRC 103806 / TLS) (Chlorobium tepidum) protein is tRNA-2-methylthio-N(6)-dimethylallyladenosine synthase.